The primary structure comprises 188 residues: GTP cyclohydrolase 1 (188 aa).

Positions 78, 81, and 150 each coordinate Zn(2+).

The protein belongs to the GTP cyclohydrolase I family. Homomer.

It catalyses the reaction GTP + H2O = 7,8-dihydroneopterin 3'-triphosphate + formate + H(+). Its pathway is cofactor biosynthesis; 7,8-dihydroneopterin triphosphate biosynthesis; 7,8-dihydroneopterin triphosphate from GTP: step 1/1. This Geobacillus sp. (strain WCH70) protein is GTP cyclohydrolase 1.